Here is a 325-residue protein sequence, read N- to C-terminus: L-lactate dehydrogenase (325 aa).

NAD(+) is bound by residues V19, D40, K45, Y70, and 84–85 (GA). Q87 and R93 together coordinate substrate. NAD(+)-binding positions include T106, 123-125 (AAN), and S148. 125 to 128 (NPVD) serves as a coordination point for substrate. Residue 153–156 (DSAR) coordinates substrate. The beta-D-fructose 1,6-bisphosphate site is built by R158 and H173. The active-site Proton acceptor is H180. Y225 carries the post-translational modification Phosphotyrosine. T234 is a substrate binding site.

Belongs to the LDH/MDH superfamily. LDH family. In terms of assembly, homotetramer.

The protein localises to the cytoplasm. It catalyses the reaction (S)-lactate + NAD(+) = pyruvate + NADH + H(+). The protein operates within fermentation; pyruvate fermentation to lactate; (S)-lactate from pyruvate: step 1/1. With respect to regulation, allosterically activated by fructose 1,6-bisphosphate (FBP). Catalyzes the conversion of lactate to pyruvate. The chain is L-lactate dehydrogenase from Latilactobacillus sakei (Lactobacillus sakei).